A 313-amino-acid polypeptide reads, in one-letter code: Pseudouridine-5'-phosphate glycosidase (313 aa).

The active-site Proton donor is the glutamate 34. The substrate site is built by lysine 95 and valine 115. Aspartate 147 is a Mn(2+) binding site. 149 to 151 (SAD) is a substrate binding site. Catalysis depends on lysine 168, which acts as the Nucleophile.

This sequence belongs to the pseudouridine-5'-phosphate glycosidase family. In terms of assembly, homotrimer. Mn(2+) serves as cofactor.

The catalysed reaction is D-ribose 5-phosphate + uracil = psi-UMP + H2O. Its function is as follows. Catalyzes the reversible cleavage of pseudouridine 5'-phosphate (PsiMP) to ribose 5-phosphate and uracil. Functions biologically in the cleavage direction, as part of a pseudouridine degradation pathway. In Deinococcus radiodurans (strain ATCC 13939 / DSM 20539 / JCM 16871 / CCUG 27074 / LMG 4051 / NBRC 15346 / NCIMB 9279 / VKM B-1422 / R1), this protein is Pseudouridine-5'-phosphate glycosidase.